A 322-amino-acid chain; its full sequence is Phosphatidylglycerol--prolipoprotein diacylglyceryl transferase (322 aa).

The next 3 membrane-spanning stretches (helical) occupy residues 23–43 (VYPIAILMGMIISILTVAFFW), 53–73 (FFALLFIIIPSSIIGARLWFV), and 97–117 (GLSIQGGVALPAILSLVYIYF). Residue Arg-143 coordinates a 1,2-diacyl-sn-glycero-3-phospho-(1'-sn-glycerol). The next 2 membrane-spanning stretches (helical) occupy residues 191–211 (PLFLYESISSIIGYIIIVWII) and 250–270 (LAAMFSILIGGMMMIYFEIWA).

The protein belongs to the Lgt family.

It localises to the cell membrane. The catalysed reaction is L-cysteinyl-[prolipoprotein] + a 1,2-diacyl-sn-glycero-3-phospho-(1'-sn-glycerol) = an S-1,2-diacyl-sn-glyceryl-L-cysteinyl-[prolipoprotein] + sn-glycerol 1-phosphate + H(+). Its pathway is protein modification; lipoprotein biosynthesis (diacylglyceryl transfer). Catalyzes the transfer of the diacylglyceryl group from phosphatidylglycerol to the sulfhydryl group of the N-terminal cysteine of a prolipoprotein, the first step in the formation of mature lipoproteins. The sequence is that of Phosphatidylglycerol--prolipoprotein diacylglyceryl transferase from Mycoplasmopsis pulmonis (strain UAB CTIP) (Mycoplasma pulmonis).